We begin with the raw amino-acid sequence, 868 residues long: Ionotropic receptor 93a (868 aa).

A signal peptide spans M1–A28. The Extracellular portion of the chain corresponds to N29–R565. N-linked (GlcNAc...) asparagine glycans are attached at residues N38, N205, N294, N305, N432, N475, N499, and N543. Residues I566–L586 form a helical membrane-spanning segment. Residues L587–G642 are Cytoplasmic-facing. The helical transmembrane segment at F643 to L663 threads the bilayer. Residues T664 to G832 lie on the Extracellular side of the membrane. The N-linked (GlcNAc...) asparagine glycan is linked to N691. The helical transmembrane segment at C833–W853 threads the bilayer. At Y854–N868 the chain is on the cytoplasmic side.

The protein belongs to the glutamate-gated ion channel (TC 1.A.10.1) family. In terms of tissue distribution, in the antenna, detected in sacculus neurons which innervate the first and second chambers (at protein level). Expressed in multiple cells of the larval dorsal organ ganglion, including the dorsal organ cool cells where it is predominately localized to the dendritic bulbs (at protein level).

It localises to the cell membrane. Functionally, integral part of various neural sensory systems in the antenna that provide the neural basis for the response to environmental changes in temperature (thermosensation) and humidity (hygrosensation). Together with Ir21a and Ir25a, mediates the response of the larval dorsal organ cool cells, a trio of cool-responsive neurons, to cooling and is required for cool avoidance behavior. Together with Ir25a and Ir40a, mediates the response of the hydrosensory sacculus neurons to changes in relative humidity, and is required for dry detection and humidiy preference behavior. This is Ionotropic receptor 93a from Drosophila melanogaster (Fruit fly).